The primary structure comprises 299 residues: Methionyl-tRNA formyltransferase (299 aa).

Residue 109–112 (SLLP) coordinates (6S)-5,6,7,8-tetrahydrofolate.

Belongs to the Fmt family.

It catalyses the reaction L-methionyl-tRNA(fMet) + (6R)-10-formyltetrahydrofolate = N-formyl-L-methionyl-tRNA(fMet) + (6S)-5,6,7,8-tetrahydrofolate + H(+). Functionally, attaches a formyl group to the free amino group of methionyl-tRNA(fMet). The formyl group appears to play a dual role in the initiator identity of N-formylmethionyl-tRNA by promoting its recognition by IF2 and preventing the misappropriation of this tRNA by the elongation apparatus. The polypeptide is Methionyl-tRNA formyltransferase (Dinoroseobacter shibae (strain DSM 16493 / NCIMB 14021 / DFL 12)).